Reading from the N-terminus, the 620-residue chain is MVTPKFMSDLFEGDHLELAKLTSPNGDNGIKFNEKHVAPRVLSRVFSEDYKRVKRRRRIFDPRGQTIHQWNKIFLVACLISLFVDPLFFYLPIVQDEVCIDIGIAVEVFLIIIRSIADVFYVIHIFMRFHTAYVAPSSRVFGRGELVIDSSKIASRYLHKGFFLDFIAALPLPQVLIWIVIPNLGGSTIANTKNVLRFIIIIQYLPRLFLIFPLSSQIVKATGVVTETAWAGAAYNLMLYMLASHVLGACWYLLSIERQEACWKSVCKLEESSCQFDFFDCNMVKDSLRVSWFVTSNVTNLCSPNSLFYQFGIYGDAVTSKVTTSAFFNKYFFCLWWGLRNLSSLGQGLLTSTFVGEIMFAIVIATLGLVLFALLIGNMQTYLQSTTVRLEEWRVKRTDTEQWMHHRQLPQELRQSVRKYDQYKWIATRGVDEESLLRGLPLDLRRDIKRHLCLELVRRVPLFDAMDERMLDAICERLKPALCTENTYLVREGDPVNEMLFIIRGNLDSYTTDGGRTGFFNSCRIGPGDFCGEELLTWALDPRPTMVIPSSTRTVKAISEVEAFALIAEDLKFVASQFRRLHSKQLRNKLRFHSHQWRTWAACFIQVAWRRTIQEKKGSC.

6 helical membrane-spanning segments follow: residues 73-93, 102-122, 161-181, 198-218, 237-257, and 356-376; these read IFLV…YLPI, IGIA…VFYV, GFFL…WIVI, FIII…SSQI, LMLY…LSIE, and GEIM…ALLI. Position 462–559 (462–559) interacts with a nucleoside 3',5'-cyclic phosphate; the sequence is LFDAMDERML…SSTRTVKAIS (98 aa).

This sequence belongs to the cyclic nucleotide-gated cation channel (TC 1.A.1.5) family. As to quaternary structure, interacts (via N-terminus) with DMI1 (via c-terminus). The Nod factor has no effect on this interaction, implying that the complex is maintained after activation. As to expression, expressed in roots, stems, leaves, flowers and pods.

The protein localises to the nucleus membrane. Functionally, cyclic nucleotide-gated channel involved in the establishment of both rhizobial and mycorrhizal associations. Required for full activation of nuclear-localized Ca(2+) oscillations by Nod and Myc factors. Simultaneous activation of the K(+)-permeable channel DMI1 and the Ca(2+) channel CNGC15 can give rise to sustained Ca(2+) oscillations. May function during fertilization in both female and male gametophytic Ca(2+) signaling. The chain is Protein CNGC15b from Medicago truncatula (Barrel medic).